The primary structure comprises 142 residues: Putative pre-16S rRNA nuclease (142 aa).

It belongs to the YqgF nuclease family.

Its subcellular location is the cytoplasm. Could be a nuclease involved in processing of the 5'-end of pre-16S rRNA. The protein is Putative pre-16S rRNA nuclease of Staphylococcus aureus (strain JH1).